The sequence spans 235 residues: Large ribosomal subunit protein uL1 (235 aa).

Belongs to the universal ribosomal protein uL1 family. As to quaternary structure, part of the 50S ribosomal subunit.

Binds directly to 23S rRNA. The L1 stalk is quite mobile in the ribosome, and is involved in E site tRNA release. In terms of biological role, protein L1 is also a translational repressor protein, it controls the translation of the L11 operon by binding to its mRNA. The sequence is that of Large ribosomal subunit protein uL1 from Lawsonia intracellularis (strain PHE/MN1-00).